The sequence spans 127 residues: Small ribosomal subunit protein bS6 (127 aa).

Residues 106–117 (ERKAQSEKKEAE) show a composition bias toward basic and acidic residues. The interval 106–127 (ERKAQSEKKEAEVSEGEGGTEA) is disordered. Positions 118-127 (VSEGEGGTEA) are enriched in acidic residues.

It belongs to the bacterial ribosomal protein bS6 family.

In terms of biological role, binds together with bS18 to 16S ribosomal RNA. In Thermotoga neapolitana (strain ATCC 49049 / DSM 4359 / NBRC 107923 / NS-E), this protein is Small ribosomal subunit protein bS6.